The primary structure comprises 354 residues: Phosphoribosylformylglycinamidine cyclo-ligase (354 aa).

It belongs to the AIR synthase family.

It localises to the cytoplasm. It catalyses the reaction 2-formamido-N(1)-(5-O-phospho-beta-D-ribosyl)acetamidine + ATP = 5-amino-1-(5-phospho-beta-D-ribosyl)imidazole + ADP + phosphate + H(+). It participates in purine metabolism; IMP biosynthesis via de novo pathway; 5-amino-1-(5-phospho-D-ribosyl)imidazole from N(2)-formyl-N(1)-(5-phospho-D-ribosyl)glycinamide: step 2/2. This chain is Phosphoribosylformylglycinamidine cyclo-ligase, found in Marinobacter nauticus (strain ATCC 700491 / DSM 11845 / VT8) (Marinobacter aquaeolei).